A 239-amino-acid chain; its full sequence is DNA repair protein RecO (239 aa).

The protein belongs to the RecO family.

Functionally, involved in DNA repair and RecF pathway recombination. This is DNA repair protein RecO from Bifidobacterium animalis subsp. lactis (strain AD011).